We begin with the raw amino-acid sequence, 194 residues long: Early E3 22.1 kDa glycoprotein (194 aa).

Residues Asn19, Asn60, Asn75, Asn87, Asn125, and Asn138 are each glycosylated (N-linked (GlcNAc...) asparagine; by host).

This Canine adenovirus serotype 1 (strain RI261) (CAdV-1) protein is Early E3 22.1 kDa glycoprotein.